A 188-amino-acid polypeptide reads, in one-letter code: Achaete-scute homolog 5 (188 aa).

A basic motif region spans residues A80–V93. The region spanning A80 to L132 is the bHLH domain. Positions K94 to L132 are helix-loop-helix motif. Residues T139–L188 form a disordered region. Positions G142–A153 are enriched in pro residues. The segment covering S158–A168 has biased composition (polar residues). Positions E169–L181 are enriched in low complexity.

Interacts with transcription factor TCF3/E12. As to expression, expressed in teeth (at protein level).

The protein resides in the nucleus. Transcription factor. Probably binds E-box motifs 5'-CANNTG-3' in complex with transcription factor TCF3/E12. Negatively modulates transcription of target genes such as CDH1/E-cadherin, perhaps by recruiting the PRC2 repressive complex to regulatory elements. Regulates ameloblast development and tooth germ growth, perhaps acting by positively modulating migration of inner enamel epithelium (IEE) cells. Plays a role in enamel formation. This Mus musculus (Mouse) protein is Achaete-scute homolog 5.